The following is a 318-amino-acid chain: Cell surface sensor SHO1 (318 aa).

Residues 1-23 form a disordered region; that stretch reads MPSYGSLHSPSLRKMEHSRGQYG. Over 1–38 the chain is Cytoplasmic; that stretch reads MPSYGSLHSPSLRKMEHSRGQYGGGRKGMSLGNVIGDP. A helical transmembrane segment spans residues 39–59; that stretch reads FALATISIAGLAWLIAFIASI. Residues 60–71 are Extracellular-facing; that stretch reads VAQIQTTQGFPT. Residues 72 to 92 traverse the membrane as a helical segment; it reads YTWWTVVFYFFLIPGVFVVVA. The Cytoplasmic segment spans residues 93 to 100; sequence SDTIQTYH. The chain crosses the membrane as a helical span at residues 101 to 121; sequence VALVGYMACGLVLTTSSVNGL. Topologically, residues 122 to 130 are extracellular; that stretch reads VYSTNGAKE. A helical transmembrane segment spans residues 131-151; that stretch reads AAAAGFILLSMVTIVWIFYFG. Residues 152-318 are Cytoplasmic-facing; that stretch reads SAPSAMPRAY…IAPSNYLILL (167 aa). Residues 172-255 are disordered; the sequence is TSNNRQTMTG…AGGAADAEIV (84 aa). Positions 190–214 are enriched in polar residues; it reads ETSTSVQPPQMYTSAQLNGFENPSP. Residues 237–250 show a composition bias toward low complexity; sequence GLPKTTTPPAGGAA. The SH3 domain maps to 259–318; sequence EYPYRAKAIYTYEANPDDANEISFSKHEILEVSDVSGRWWQARKETGETGIAPSNYLILL.

This sequence belongs to the SHO1 family. Forms homooligomers.

The protein resides in the cell membrane. Its function is as follows. MSB2 and SHO1 have overlapping functions in recognizing various surface signals for MAPK PMK1 activation and appressorium formation. While MSB2 is critical for sensing surface hydrophobicity and cutin monomers, SHO1 may play a more important role in recognizing rice leaf waxes. The chain is Cell surface sensor SHO1 from Pyricularia oryzae (strain 70-15 / ATCC MYA-4617 / FGSC 8958) (Rice blast fungus).